The chain runs to 538 residues: Zinc finger protein 155 (538 aa).

One can recognise a KRAB domain in the interval 8-78 (VTFKDVAVVF…GTATQREGNS (71 aa)). 11 consecutive C2H2-type zinc fingers follow at residues 176–198 (YTCD…QRVH), 204–226 (FMCD…QRVH), 232–254 (FKCE…RKLH), 260–282 (YICE…KRIH), 288–310 (FKCD…SMVH), 316–338 (FRCD…CMVH), 344–366 (YRCE…QVVH), 372–394 (YNCK…QRVH), 400–422 (FKCE…QRSH), 428–450 (YKCE…QRVH), and 456–478 (YNCK…KRLH). A C2H2-type 12; degenerate zinc finger spans residues 484-506 (FKCEDCGKRLVHRTYRKDQPRDY).

The protein belongs to the krueppel C2H2-type zinc-finger protein family.

The protein resides in the nucleus. In terms of biological role, may be involved in transcriptional regulation. In Homo sapiens (Human), this protein is Zinc finger protein 155 (ZNF155).